Consider the following 176-residue polypeptide: Cathelicidin-2 (176 aa).

Positions 1–29 (METQRASLSLGRCSLWLLLLGLVLPSASA) are cleaved as a signal peptide. Gln-30 is modified (pyrrolidone carboxylic acid). The propeptide occupies 30–130 (QALSYREAVL…DINCNELQSV (101 aa)). Intrachain disulfides connect Cys-85/Cys-96 and Cys-107/Cys-124. The disordered stretch occupies residues 157 to 176 (IFPPIRPPFRPPLGPFPGRR). At Pro-173 the chain carries Proline amide. Positions 174-176 (GRR) are cleaved as a propeptide — removed in mature form.

It belongs to the cathelicidin family. In terms of processing, elastase is responsible for its maturation. In terms of tissue distribution, large granules of neutrophils.

The protein localises to the secreted. Functionally, exerts, in vitro, a potent antimicrobial activity. Probably due to an impairment of the function of the respiratory chain and of energy-dependent activities in the inner membrane of susceptible microorganisms. In Bos taurus (Bovine), this protein is Cathelicidin-2 (CATHL2).